Consider the following 117-residue polypeptide: DNA-binding protein MK1619 (117 aa).

This sequence belongs to the PDCD5 family.

This is DNA-binding protein MK1619 from Methanopyrus kandleri (strain AV19 / DSM 6324 / JCM 9639 / NBRC 100938).